The sequence spans 397 residues: Protein Brevis radix-like 1 (397 aa).

2 disordered regions span residues 14–37 (GAPP…AGEC) and 105–148 (RAGS…EDDE). Acidic residues predominate over residues 124–148 (AGDEEEEEEEEEEEGTTADGSEDDE). A BRX 1 domain is found at 150–205 (KEWVAQVEPGVLITFLSLPEGGNDLKRIRFSREIFNKWQAQRWWAENYEKVMELYN). Disordered stretches follow at residues 212–278 (QTPL…QQHH) and 300–342 (SISG…DQER). Positions 220-230 (KSEDESLKEDI) are enriched in basic and acidic residues. Residues 309 to 320 (SSMDASMRSSSS) are compositionally biased toward low complexity. Residues 342–397 (REWVEEDEPGVYITIRALPGGIRELRRVRFSREKFSEMHARLWWEENRARIHDQYL) form the BRX 2 domain.

The protein belongs to the BRX family.

It localises to the nucleus. The polypeptide is Protein Brevis radix-like 1 (BRXL1) (Oryza sativa subsp. japonica (Rice)).